Here is a 138-residue protein sequence, read N- to C-terminus: RuBisCO chaperone RbcX (138 aa).

The disordered stretch occupies residues 118–138; that stretch reads VDNFPSETSNGESNNNDSPPS. Positions 122-138 are enriched in polar residues; the sequence is PSETSNGESNNNDSPPS.

Belongs to the RbcX family. As to quaternary structure, homodimer. Interacts with the exposed C-terminal peptide of RbcL via its central cleft, contacts a second RbcL monomer via its peripheral polar surface.

It is found in the carboxysome. The protein resides in the cytoplasm. Functionally, an RbcL-specific chaperone. The central cleft of the RbcX homodimer (RbcX2) binds the C-terminus of an RbcL monomer, stabilizing the C-terminus and probably preventing its reassociation with chaperonin GroEL-ES. At the same time the peripheral region of RbcX2 binds a second RbcL monomer, bridging the RbcL homodimers in the correct orientation. The RbcX2(2)-bound RbcL dimers then assemble into the RbcL8 core (RbcL8-(RbcX2)8). RbcS binding triggers the release of RbcX2. The protein is RuBisCO chaperone RbcX of Synechocystis sp. (strain ATCC 27184 / PCC 6803 / Kazusa).